The chain runs to 2188 residues: Glutamate synthase 2 [NADH], chloroplastic (2188 aa).

The N-terminal 30 residues, 1–30 (MSAAQGLALKLRAAPAAGGVRGEKRRRAAS), are a transit peptide targeting the chloroplast. 2 disordered regions span residues 14–40 (APAA…ARPR) and 61–94 (VAPR…PESS). Positions 65-80 (ASASRQAEAGAGAGAA) are enriched in low complexity. The active-site Nucleophile is the Cys-107. The region spanning 107 to 511 (CGVGFIAELS…PGMMLLVDFE (405 aa)) is the Glutamine amidotransferase type-2 domain. An FMN-binding site is contributed by 1198–1255 (LAETHQTLVANGLRGRAVLQTDGQMKTGRDVAVACLLGAEEFGFSTAPLITLGCIMMR). The [3Fe-4S] cluster site is built by Cys-1251, Cys-1257, and Cys-1262. 1974 to 1988 (GGGDTGTDCIGTSIR) is a binding site for NAD(+).

It belongs to the glutamate synthase family. Monomer. Requires [3Fe-4S] cluster as cofactor. FAD is required as a cofactor. The cofactor is FMN. Expressed in leaf blades and sheaths.

The protein resides in the plastid. It is found in the chloroplast. It carries out the reaction 2 L-glutamate + NAD(+) = L-glutamine + 2-oxoglutarate + NADH + H(+). It participates in amino-acid biosynthesis; L-glutamate biosynthesis via GLT pathway; L-glutamate from 2-oxoglutarate and L-glutamine (NAD(+) route): step 1/1. Its pathway is energy metabolism; nitrogen metabolism. Functionally, involved in glutamate biosynthesis. In Oryza sativa subsp. japonica (Rice), this protein is Glutamate synthase 2 [NADH], chloroplastic.